A 359-amino-acid polypeptide reads, in one-letter code: 3-dehydroquinate synthase (359 aa).

Residues Asp71 to Lys76, Gly105 to Asp109, Thr129 to Thr130, Lys142, Lys151, and Cys169 to Thr172 each bind NAD(+). Glu184, His247, and His264 together coordinate Zn(2+).

It belongs to the sugar phosphate cyclases superfamily. Dehydroquinate synthase family. NAD(+) is required as a cofactor. Requires Co(2+) as cofactor. The cofactor is Zn(2+).

It localises to the cytoplasm. The catalysed reaction is 7-phospho-2-dehydro-3-deoxy-D-arabino-heptonate = 3-dehydroquinate + phosphate. Its pathway is metabolic intermediate biosynthesis; chorismate biosynthesis; chorismate from D-erythrose 4-phosphate and phosphoenolpyruvate: step 2/7. Its function is as follows. Catalyzes the conversion of 3-deoxy-D-arabino-heptulosonate 7-phosphate (DAHP) to dehydroquinate (DHQ). This Shewanella oneidensis (strain ATCC 700550 / JCM 31522 / CIP 106686 / LMG 19005 / NCIMB 14063 / MR-1) protein is 3-dehydroquinate synthase.